The primary structure comprises 298 residues: Probable endonuclease 4 (298 aa).

The Zn(2+) site is built by His69, His111, Glu146, Asp180, His183, His215, Asp228, His230, and Glu260.

This sequence belongs to the AP endonuclease 2 family. It depends on Zn(2+) as a cofactor.

The catalysed reaction is Endonucleolytic cleavage to 5'-phosphooligonucleotide end-products.. In terms of biological role, endonuclease IV plays a role in DNA repair. It cleaves phosphodiester bonds at apurinic or apyrimidinic (AP) sites, generating a 3'-hydroxyl group and a 5'-terminal sugar phosphate. This Bacillus cytotoxicus (strain DSM 22905 / CIP 110041 / 391-98 / NVH 391-98) protein is Probable endonuclease 4.